The chain runs to 122 residues: Large ribosomal subunit protein uL22 (122 aa).

The tract at residues Val-102–Lys-122 is disordered.

This sequence belongs to the universal ribosomal protein uL22 family. As to quaternary structure, part of the 50S ribosomal subunit.

In terms of biological role, this protein binds specifically to 23S rRNA; its binding is stimulated by other ribosomal proteins, e.g. L4, L17, and L20. It is important during the early stages of 50S assembly. It makes multiple contacts with different domains of the 23S rRNA in the assembled 50S subunit and ribosome. Functionally, the globular domain of the protein is located near the polypeptide exit tunnel on the outside of the subunit, while an extended beta-hairpin is found that lines the wall of the exit tunnel in the center of the 70S ribosome. This Helicobacter pylori (strain ATCC 700392 / 26695) (Campylobacter pylori) protein is Large ribosomal subunit protein uL22.